The following is a 447-amino-acid chain: Tubulin beta chain (447 aa).

Residues Q11, E69, S138, G142, T143, G144, N204, and N226 each contribute to the GTP site. E69 is a Mg(2+) binding site. Positions 427 to 447 (EAHMDDEEAEEAYEDEAPPEE) are disordered. The segment covering 430–447 (MDDEEAEEAYEDEAPPEE) has biased composition (acidic residues).

The protein belongs to the tubulin family. As to quaternary structure, dimer of alpha and beta chains. A typical microtubule is a hollow water-filled tube with an outer diameter of 25 nm and an inner diameter of 15 nM. Alpha-beta heterodimers associate head-to-tail to form protofilaments running lengthwise along the microtubule wall with the beta-tubulin subunit facing the microtubule plus end conferring a structural polarity. Microtubules usually have 13 protofilaments but different protofilament numbers can be found in some organisms and specialized cells. The cofactor is Mg(2+).

It localises to the cytoplasm. Its subcellular location is the cytoskeleton. Functionally, tubulin is the major constituent of microtubules, a cylinder consisting of laterally associated linear protofilaments composed of alpha- and beta-tubulin heterodimers. Microtubules grow by the addition of GTP-tubulin dimers to the microtubule end, where a stabilizing cap forms. Below the cap, tubulin dimers are in GDP-bound state, owing to GTPase activity of alpha-tubulin. In Uromyces fabae (Rust fungus), this protein is Tubulin beta chain (TBB1).